A 231-amino-acid polypeptide reads, in one-letter code: MIDYRGWRHTFKLDPDKTIDDEALEAICESGTDAIIVGGTYGVTYDNTLELMSRLRRYAVPAVLEISSLDAVVPGFDSYLIPLVLNAGDPDWIFAPHVSGLQAFGAYIHWDEIITEGYIIANPEAGVAQLTKARPIADATQAKAYAQVATNICRLPIVYMEYSGTYGDPTIVKAAKTGAGEAHLFYGGGIRNPEQAAEMAAIADTVVVGNVIYDDLDAALATVKAVKGTQY.

Lys-12 serves as a coordination point for sn-glycerol 1-phosphate. Mg(2+) is bound by residues Asp-14 and Thr-40. Sn-glycerol 1-phosphate contacts are provided by residues 159-164, Gly-189, and 209-210; these read YMEYSG and GN.

The protein belongs to the GGGP/HepGP synthase family. Group I subfamily. Homodimer. Mg(2+) is required as a cofactor.

It carries out the reaction sn-glycerol 1-phosphate + all-trans-heptaprenyl diphosphate = 3-heptaprenyl-sn-glycero-1-phosphate + diphosphate. It functions in the pathway membrane lipid metabolism; glycerophospholipid metabolism. Prenyltransferase that catalyzes in vivo the transfer of the heptaprenyl moiety of heptaprenyl pyrophosphate (HepPP; 35 carbon atoms) to the C3 hydroxyl of sn-glycerol-1-phosphate (G1P), producing heptaprenylglyceryl phosphate (HepGP). This reaction is an ether-bond-formation step in the biosynthesis of archaea-type G1P-based membrane lipids found in Bacillales. The protein is Heptaprenylglyceryl phosphate synthase of Brevibacillus brevis (strain 47 / JCM 6285 / NBRC 100599).